The primary structure comprises 469 residues: Cysteine--tRNA ligase (469 aa).

Zn(2+) is bound at residue Cys33. Residues 35–45 (ATVQGLPHIGH) carry the 'HIGH' region motif. Cys211, His236, and Glu240 together coordinate Zn(2+). Positions 267–271 (KMSKS) match the 'KMSKS' region motif. Lys270 lines the ATP pocket.

The protein belongs to the class-I aminoacyl-tRNA synthetase family. As to quaternary structure, monomer. It depends on Zn(2+) as a cofactor.

It localises to the cytoplasm. The enzyme catalyses tRNA(Cys) + L-cysteine + ATP = L-cysteinyl-tRNA(Cys) + AMP + diphosphate. The sequence is that of Cysteine--tRNA ligase (cysS) from Mycobacterium bovis (strain ATCC BAA-935 / AF2122/97).